The following is a 220-amino-acid chain: Chloramphenicol acetyltransferase (220 aa).

The active-site Proton acceptor is the histidine 187.

It belongs to the chloramphenicol acetyltransferase family. Homotrimer.

The catalysed reaction is chloramphenicol + acetyl-CoA = chloramphenicol 3-acetate + CoA. Functionally, this enzyme is an effector of chloramphenicol resistance in bacteria. The sequence is that of Chloramphenicol acetyltransferase (cat86) from Bacillus pumilus (Bacillus mesentericus).